We begin with the raw amino-acid sequence, 366 residues long: Anthranilate phosphoribosyltransferase (366 aa).

5-phospho-alpha-D-ribose 1-diphosphate contacts are provided by residues Gly-103, 106–107 (GD), Thr-111, 113–116 (NLST), 131–139 (KHGNRASSS), and Gly-143. Gly-103 contributes to the anthranilate binding site. A Mg(2+)-binding site is contributed by Ser-115. Asn-134 lines the anthranilate pocket. Arg-189 provides a ligand contact to anthranilate. Residues Asp-247 and Glu-248 each coordinate Mg(2+).

This sequence belongs to the anthranilate phosphoribosyltransferase family. In terms of assembly, homodimer. Mg(2+) serves as cofactor.

The enzyme catalyses N-(5-phospho-beta-D-ribosyl)anthranilate + diphosphate = 5-phospho-alpha-D-ribose 1-diphosphate + anthranilate. It participates in amino-acid biosynthesis; L-tryptophan biosynthesis; L-tryptophan from chorismate: step 2/5. Its function is as follows. Catalyzes the transfer of the phosphoribosyl group of 5-phosphorylribose-1-pyrophosphate (PRPP) to anthranilate to yield N-(5'-phosphoribosyl)-anthranilate (PRA). This is Anthranilate phosphoribosyltransferase from Mycobacterium leprae (strain Br4923).